The primary structure comprises 416 residues: Splicing factor U2AF 50 kDa subunit (416 aa).

Over residues Met1–Arg10 the composition is skewed to basic and acidic residues. The segment at Met1–Pro47 is disordered. Basic residues-rich tracts occupy residues Glu11–Asp21 and Asp29–Pro40. RRM domains lie at Arg93–Asp175, His207–Val285, and Glu318–Pro408.

It belongs to the splicing factor SR family. In terms of assembly, forms a heterodimer with the U2AF small subunit.

The protein resides in the nucleus. Necessary for the splicing of pre-mRNA. Binds to the polypyrimidine tract of introns early during spliceosome assembly. This is Splicing factor U2AF 50 kDa subunit (U2af50) from Drosophila melanogaster (Fruit fly).